The chain runs to 336 residues: D-erythrose-4-phosphate dehydrogenase (336 aa).

NAD(+) is bound at residue 11 to 12; that stretch reads RI. Substrate contacts are provided by residues 153 to 155, Arg-199, 212 to 213, and Arg-235; these read SCT and TR. The Nucleophile role is filled by Cys-154. Asn-317 provides a ligand contact to NAD(+).

Belongs to the glyceraldehyde-3-phosphate dehydrogenase family. Epd subfamily. As to quaternary structure, homotetramer.

The protein resides in the cytoplasm. The catalysed reaction is D-erythrose 4-phosphate + NAD(+) + H2O = 4-phospho-D-erythronate + NADH + 2 H(+). The protein operates within cofactor biosynthesis; pyridoxine 5'-phosphate biosynthesis; pyridoxine 5'-phosphate from D-erythrose 4-phosphate: step 1/5. Its function is as follows. Catalyzes the NAD-dependent conversion of D-erythrose 4-phosphate to 4-phosphoerythronate. The protein is D-erythrose-4-phosphate dehydrogenase of Alteromonas mediterranea (strain DSM 17117 / CIP 110805 / LMG 28347 / Deep ecotype).